A 42-amino-acid chain; its full sequence is Photosystem I reaction center subunit IX (42 aa).

Residues 8-28 (YLSTIPVVGAIWLTFTAGFII) traverse the membrane as a helical segment.

Belongs to the PsaJ family.

It localises to the plastid. It is found in the chloroplast thylakoid membrane. Functionally, may help in the organization of the PsaE and PsaF subunits. The sequence is that of Photosystem I reaction center subunit IX from Gracilaria tenuistipitata var. liui (Red alga).